Consider the following 437-residue polypeptide: Ribosomal protein uS12 methylthiotransferase RimO (437 aa).

The MTTase N-terminal domain occupies 3–118 (KKFYITTLGC…AGKILREKFP (116 aa)). Residues C12, C48, C81, C157, C161, and C164 each coordinate [4Fe-4S] cluster. Positions 143-370 (NYSKPYAYVK…RDSHLEILEE (228 aa)) constitute a Radical SAM core domain. Residues 373 to 437 (ESRIGRTYDA…YEYDMNGTWV (65 aa)) form the TRAM domain.

Belongs to the methylthiotransferase family. RimO subfamily. [4Fe-4S] cluster is required as a cofactor.

It localises to the cytoplasm. It catalyses the reaction L-aspartate(89)-[ribosomal protein uS12]-hydrogen + (sulfur carrier)-SH + AH2 + 2 S-adenosyl-L-methionine = 3-methylsulfanyl-L-aspartate(89)-[ribosomal protein uS12]-hydrogen + (sulfur carrier)-H + 5'-deoxyadenosine + L-methionine + A + S-adenosyl-L-homocysteine + 2 H(+). In terms of biological role, catalyzes the methylthiolation of an aspartic acid residue of ribosomal protein uS12. The sequence is that of Ribosomal protein uS12 methylthiotransferase RimO from Leptospira interrogans serogroup Icterohaemorrhagiae serovar Lai (strain 56601).